The primary structure comprises 127 residues: Large ribosomal subunit protein uL22 (127 aa).

The protein belongs to the universal ribosomal protein uL22 family. Part of the 50S ribosomal subunit.

Functionally, this protein binds specifically to 23S rRNA; its binding is stimulated by other ribosomal proteins, e.g. L4, L17, and L20. It is important during the early stages of 50S assembly. It makes multiple contacts with different domains of the 23S rRNA in the assembled 50S subunit and ribosome. The globular domain of the protein is located near the polypeptide exit tunnel on the outside of the subunit, while an extended beta-hairpin is found that lines the wall of the exit tunnel in the center of the 70S ribosome. The sequence is that of Large ribosomal subunit protein uL22 from Rhizorhabdus wittichii (strain DSM 6014 / CCUG 31198 / JCM 15750 / NBRC 105917 / EY 4224 / RW1) (Sphingomonas wittichii).